Consider the following 34-residue polypeptide: Photosystem II reaction center protein M (34 aa).

A helical transmembrane segment spans residues Ile5–Leu25.

This sequence belongs to the PsbM family. In terms of assembly, PSII is composed of 1 copy each of membrane proteins PsbA, PsbB, PsbC, PsbD, PsbE, PsbF, PsbH, PsbI, PsbJ, PsbK, PsbL, PsbM, PsbT, PsbX, PsbY, PsbZ, Psb30/Ycf12, at least 3 peripheral proteins of the oxygen-evolving complex and a large number of cofactors. It forms dimeric complexes.

It is found in the plastid. It localises to the chloroplast thylakoid membrane. Its function is as follows. One of the components of the core complex of photosystem II (PSII). PSII is a light-driven water:plastoquinone oxidoreductase that uses light energy to abstract electrons from H(2)O, generating O(2) and a proton gradient subsequently used for ATP formation. It consists of a core antenna complex that captures photons, and an electron transfer chain that converts photonic excitation into a charge separation. This subunit is found at the monomer-monomer interface. The polypeptide is Photosystem II reaction center protein M (Nephroselmis olivacea (Green alga)).